The sequence spans 317 residues: Small ribosomal subunit protein uS2 (317 aa).

Ser2 carries the post-translational modification N-acetylserine. Laminin-binding regions lie at residues 161-180 (IPCNNKGHHSVGLMWWMLSR) and 205-229 (RDPEEIEKEEQAAAEKAVGKEEFQG). [DE]-W-[ST] repeat units follow at residues 230-232 (EWT) and 245-247 (DWS). Residues 242-317 (EVADWSEGVA…EWGGASADWS (76 aa)) form a laminin-binding region. Residues 271–284 (EAAAPSKAPAAAEG) are compositionally biased toward low complexity. Residues 271-317 (EAAAPSKAPAAAEGFAEDWSAQPATEDWSAAPTAQATEWGGASADWS) form a disordered region. [DE]-W-[ST] repeat units follow at residues 288-290 (DWS), 297-299 (DWS), and 315-317 (DWS).

The protein belongs to the universal ribosomal protein uS2 family. In terms of assembly, monomer (37LRP) and homodimer (67LR). Component of the small ribosomal subunit. Mature ribosomes consist of a small (40S) and a large (60S) subunit. The 40S subunit contains about 33 different proteins and 1 molecule of RNA (18S). The 60S subunit contains about 49 different proteins and 3 molecules of RNA (28S, 5.8S and 5S). Interacts with rps21. Interacts with several laminins including at least lamb1. Interacts with mdk. In terms of processing, acylated. Acylation may be a prerequisite for conversion of the monomeric 37 kDa laminin receptor precursor (37LRP) to the mature dimeric 67 kDa laminin receptor (67LR), and may provide a mechanism for membrane association. Cleaved by stromelysin-3 (ST3) at the cell surface. Cleavage by stromelysin-3 may be a mechanism to alter cell-extracellular matrix interactions.

The protein localises to the cell membrane. It localises to the cytoplasm. Its subcellular location is the nucleus. In terms of biological role, required for the assembly and/or stability of the 40S ribosomal subunit. Required for the processing of the 20S rRNA-precursor to mature 18S rRNA in a late step of the maturation of 40S ribosomal subunits. Also functions as a cell surface receptor for laminin. Plays a role in cell adhesion to the basement membrane and in the consequent activation of signaling transduction pathways. May play a role in cell fate determination and tissue morphogenesis. The protein is Small ribosomal subunit protein uS2 (rpsa) of Salmo salar (Atlantic salmon).